The chain runs to 349 residues: Isopentenyl-diphosphate delta-isomerase (349 aa).

6-7 (RK) contacts substrate. FMN contacts are provided by residues 62-64 (AMT), serine 93, and asparagine 122. Glutamine 152 serves as a coordination point for substrate. Glutamate 153 contacts Mg(2+). FMN-binding positions include lysine 184, threonine 214, 258-259 (GG), and 280-281 (AG).

It belongs to the IPP isomerase type 2 family. Homooctamer. Dimer of tetramers. It depends on FMN as a cofactor. Requires NADPH as cofactor. Mg(2+) serves as cofactor.

The protein resides in the cytoplasm. The enzyme catalyses isopentenyl diphosphate = dimethylallyl diphosphate. In terms of biological role, involved in the biosynthesis of isoprenoids. Catalyzes the 1,3-allylic rearrangement of the homoallylic substrate isopentenyl (IPP) to its allylic isomer, dimethylallyl diphosphate (DMAPP). The sequence is that of Isopentenyl-diphosphate delta-isomerase from Bacillus cereus (strain AH187).